The following is a 171-amino-acid chain: 3-hydroxydecanoyl-[acyl-carrier-protein] dehydratase (171 aa).

Residue histidine 70 is part of the active site.

The protein belongs to the thioester dehydratase family. FabA subfamily. Homodimer.

It localises to the cytoplasm. The catalysed reaction is a (3R)-hydroxyacyl-[ACP] = a (2E)-enoyl-[ACP] + H2O. It catalyses the reaction (3R)-hydroxydecanoyl-[ACP] = (2E)-decenoyl-[ACP] + H2O. It carries out the reaction (2E)-decenoyl-[ACP] = (3Z)-decenoyl-[ACP]. Its pathway is lipid metabolism; fatty acid biosynthesis. Its function is as follows. Necessary for the introduction of cis unsaturation into fatty acids. Catalyzes the dehydration of (3R)-3-hydroxydecanoyl-ACP to E-(2)-decenoyl-ACP and then its isomerization to Z-(3)-decenoyl-ACP. Can catalyze the dehydratase reaction for beta-hydroxyacyl-ACPs with saturated chain lengths up to 16:0, being most active on intermediate chain length. This Pseudomonas aeruginosa (strain LESB58) protein is 3-hydroxydecanoyl-[acyl-carrier-protein] dehydratase.